The primary structure comprises 309 residues: Putative HTH-type transcriptional regulatory protein AF_1787 (309 aa).

The HTH cro/C1-type domain occupies isoleucine 131–isoleucine 185. The H-T-H motif DNA-binding region spans valine 142–glutamate 161.

The chain is Putative HTH-type transcriptional regulatory protein AF_1787 from Archaeoglobus fulgidus (strain ATCC 49558 / DSM 4304 / JCM 9628 / NBRC 100126 / VC-16).